Reading from the N-terminus, the 327-residue chain is Pyruvate dehydrogenase E1 component subunit beta (327 aa).

A thiamine diphosphate-binding site is contributed by E60.

Heterodimer of an alpha and a beta chain. Thiamine diphosphate serves as cofactor.

It carries out the reaction N(6)-[(R)-lipoyl]-L-lysyl-[protein] + pyruvate + H(+) = N(6)-[(R)-S(8)-acetyldihydrolipoyl]-L-lysyl-[protein] + CO2. In terms of biological role, the pyruvate dehydrogenase complex catalyzes the overall conversion of pyruvate to acetyl-CoA and CO(2). It contains multiple copies of three enzymatic components: pyruvate dehydrogenase (E1), dihydrolipoamide acetyltransferase (E2) and lipoamide dehydrogenase (E3). This Acholeplasma laidlawii protein is Pyruvate dehydrogenase E1 component subunit beta (pdhB).